A 462-amino-acid polypeptide reads, in one-letter code: Exodeoxyribonuclease 7 large subunit (462 aa).

It belongs to the XseA family. As to quaternary structure, heterooligomer composed of large and small subunits.

Its subcellular location is the cytoplasm. It carries out the reaction Exonucleolytic cleavage in either 5'- to 3'- or 3'- to 5'-direction to yield nucleoside 5'-phosphates.. Its function is as follows. Bidirectionally degrades single-stranded DNA into large acid-insoluble oligonucleotides, which are then degraded further into small acid-soluble oligonucleotides. In Pectobacterium carotovorum subsp. carotovorum (strain PC1), this protein is Exodeoxyribonuclease 7 large subunit.